A 144-amino-acid chain; its full sequence is Putative acetyltransferase SAOUHSC_00995 (144 aa).

The N-acetyltransferase domain maps to Met-1 to Thr-141. CoA-binding positions include Val-71 to Val-73, Gly-79, and Pro-112 to Tyr-114.

Belongs to the UPF0039 (ElaA) family.

In terms of biological role, could catalyze the transfer of an acetyl group from acetyl coenzyme A (AcCoA) to an acceptor substrate and release both CoA and the acetylated product. This Staphylococcus aureus (strain NCTC 8325 / PS 47) protein is Putative acetyltransferase SAOUHSC_00995.